The following is an 832-amino-acid chain: Subtilisin-like protease SBT2.1 (832 aa).

A signal peptide spans 1 to 24; it reads MDESSLVRFVFLLCLVSSSVFCLA. A propeptide spans 25–138 (activation peptide); it reads ESDQNATVSS…VVLDFLVEKA (114 aa). Residues asparagine 29 and asparagine 73 are each glycosylated (N-linked (GlcNAc...) asparagine). In terms of domain architecture, Inhibitor I9 spans 36-136; sequence VYIVTLKDRP…ENVVLDFLVE (101 aa). The Peptidase S8 domain maps to 145-684; that stretch reads FLGLPRGAWL…SGFVNATAAL (540 aa). The active-site Charge relay system is aspartate 172. Residue asparagine 233 is glycosylated (N-linked (GlcNAc...) asparagine). The active-site Charge relay system is histidine 247. N-linked (GlcNAc...) asparagine glycosylation is found at asparagine 272, asparagine 315, asparagine 390, asparagine 417, asparagine 470, asparagine 515, and asparagine 522. In terms of domain architecture, PA spans 408–503; that stretch reads LVLATHALRN…MDIPGILISS (96 aa). Catalysis depends on serine 609, which acts as the Charge relay system. N-linked (GlcNAc...) asparagine glycans are attached at residues asparagine 679, asparagine 705, asparagine 713, asparagine 723, asparagine 760, and asparagine 801.

It belongs to the peptidase S8 family.

Its subcellular location is the secreted. The polypeptide is Subtilisin-like protease SBT2.1 (Arabidopsis thaliana (Mouse-ear cress)).